We begin with the raw amino-acid sequence, 199 residues long: Small ribosomal subunit protein uS4 (199 aa).

The S4 RNA-binding domain occupies 94–157 (SRLDNLVYRA…RKLKLVQEAL (64 aa)).

This sequence belongs to the universal ribosomal protein uS4 family. Part of the 30S ribosomal subunit. Contacts protein S5. The interaction surface between S4 and S5 is involved in control of translational fidelity.

Functionally, one of the primary rRNA binding proteins, it binds directly to 16S rRNA where it nucleates assembly of the body of the 30S subunit. In terms of biological role, with S5 and S12 plays an important role in translational accuracy. The chain is Small ribosomal subunit protein uS4 from Mycoplasmopsis synoviae (strain 53) (Mycoplasma synoviae).